We begin with the raw amino-acid sequence, 58 residues long: Large ribosomal subunit protein bL32c (58 aa).

It belongs to the bacterial ribosomal protein bL32 family.

The protein localises to the plastid. The protein resides in the chloroplast. The protein is Large ribosomal subunit protein bL32c (rpl32) of Adiantum capillus-veneris (Maidenhair fern).